Reading from the N-terminus, the 342-residue chain is MDSINKIINFLFPLLTLYALLVFYPTYQRLKSAVSICRNLFSENVAGKVVVITGAASGIGEALAYEYGKRGAYLALVDIRGEPLFHVAALAELYGSPEVLPLVADVSKLQDCERFIRATVLHFGRLDHLVTNAGVAPLYFFADIEDVSKASPAMDINFWGSVYCTFFASPYLKKFRGRIVVIASGCGYIASPRLSFYCASKAAVIAFYETLRTEFGSDIGVTIVAPGIVDSEMSRGKFMTKDGKLVVDKELRDVQMSVLPVESAERCAKAIMRSVCRGDRYLLEPDWIGCVILLKVFCSEATEWVARWLLIARPKFPMMEALSNKILDVAHAFNSFFSFPHY.

The chain crosses the membrane as a helical; Signal-anchor for type II membrane protein span at residues 10–30 (FLFPLLTLYALLVFYPTYQRL). NADP(+)-binding positions include 54–80 (GAAS…VDIR) and D105. S184 provides a ligand contact to substrate. Residue Y197 is the Proton acceptor of the active site. Residues 197-201 (YCASK) and K201 contribute to the NADP(+) site.

Belongs to the short-chain dehydrogenases/reductases (SDR) family.

It is found in the membrane. The chain is 11-beta-hydroxysteroid dehydrogenase-like 6 (HSD6) from Arabidopsis thaliana (Mouse-ear cress).